The sequence spans 235 residues: Small ribosomal subunit protein uS2c (235 aa).

The protein belongs to the universal ribosomal protein uS2 family.

Its subcellular location is the plastid. It localises to the chloroplast. The sequence is that of Small ribosomal subunit protein uS2c (rps2) from Zygnema circumcarinatum (Green alga).